Here is a 623-residue protein sequence, read N- to C-terminus: uncharacterized protein (623 aa).

A run of 5 helical transmembrane segments spans residues 242–262 (IVLALTILALLLGLRKLITWL), 288–308 (IVSPVSVFLALFSCDVALDIF), 318–338 (VSMWVGAVYIMLLAWLVIALF), 361–381 (VINLILKVVYFLIFIVALLGV), and 387–407 (FNVSAIIASLGIGGLAVALAV).

Belongs to the MscS (TC 1.A.23) family.

It localises to the cell membrane. This is an uncharacterized protein from Helicobacter pylori (strain ATCC 700392 / 26695) (Campylobacter pylori).